The following is a 310-amino-acid chain: Nuclear hormone receptor family member nhr-89 (310 aa).

The nuclear receptor DNA-binding region spans 5 to 79 (EGPCRVCHSV…SGMRRDCVRK (75 aa)). NR C4-type zinc fingers lie at residues 8–29 (CRVC…CMSC) and 43–67 (CPAN…YNKC). In terms of domain architecture, NR LBD spans 101-310 (KLSESYEELL…TLHQKYQIPF (210 aa)).

It belongs to the nuclear hormone receptor family.

Its subcellular location is the nucleus. Functionally, orphan nuclear receptor. The protein is Nuclear hormone receptor family member nhr-89 (nhr-89) of Caenorhabditis elegans.